Here is a 307-residue protein sequence, read N- to C-terminus: MIQSHVSVMLNEMLEALSPKAGESYLDCTFGAGGYSKAILESCNCYVTALDRDPNVIKRAEEIQQSYGERFDFVETNFADSFAKLKEKKFDGIVLDLGVSSMQLDIADRGFSFLHNGPLDMRMSGQGLSAEEFVNAAEEKELADVIYKYGDESFSRRIAKRIVEYRKTARIDSTSKLAEIVRSSIGFRKGKIDPATKTFQAIRIYVNDELGELEQFLVNVKNILKKDGRLVVVSFHSLEDRIVKNFFKENSEKPVVRSKYAKDDMTIDPNKWLKIITNKALAPSDKEVGLNIRARSAKLRAAKAIYE.

S-adenosyl-L-methionine is bound by residues 33-35, D51, F82, D96, and Q103; that span reads GGY.

This sequence belongs to the methyltransferase superfamily. RsmH family.

The protein resides in the cytoplasm. It catalyses the reaction cytidine(1402) in 16S rRNA + S-adenosyl-L-methionine = N(4)-methylcytidine(1402) in 16S rRNA + S-adenosyl-L-homocysteine + H(+). Specifically methylates the N4 position of cytidine in position 1402 (C1402) of 16S rRNA. This is Ribosomal RNA small subunit methyltransferase H from Rickettsia africae (strain ESF-5).